The chain runs to 234 residues: Transcriptional activator protein TraR (234 aa).

Residues 167–232 form the HTH luxR-type domain; sequence TAEDAAWLDP…HLTALAIKRK (66 aa). A DNA-binding region (H-T-H motif) is located at residues 191–210; the sequence is MEEIADVEEVKYNSVRVKLR.

The protein belongs to the autoinducer-regulated transcriptional regulatory protein family.

Functionally, positive regulation of conjugal transfer of Ti plasmids. In Agrobacterium vitis (Rhizobium vitis), this protein is Transcriptional activator protein TraR (traR).